A 217-amino-acid chain; its full sequence is 3,4-dihydroxy-2-butanone 4-phosphate synthase (217 aa).

Residues 37 to 38 (RE), Asp42, 150 to 154 (RRGHT), and Glu174 contribute to the D-ribulose 5-phosphate site. Residue Glu38 coordinates Mg(2+). Mg(2+) is bound at residue His153.

Belongs to the DHBP synthase family. As to quaternary structure, homodimer. Requires Mg(2+) as cofactor. The cofactor is Mn(2+).

The catalysed reaction is D-ribulose 5-phosphate = (2S)-2-hydroxy-3-oxobutyl phosphate + formate + H(+). It participates in cofactor biosynthesis; riboflavin biosynthesis; 2-hydroxy-3-oxobutyl phosphate from D-ribulose 5-phosphate: step 1/1. Catalyzes the conversion of D-ribulose 5-phosphate to formate and 3,4-dihydroxy-2-butanone 4-phosphate. The sequence is that of 3,4-dihydroxy-2-butanone 4-phosphate synthase from Yersinia enterocolitica serotype O:8 / biotype 1B (strain NCTC 13174 / 8081).